A 245-amino-acid chain; its full sequence is uncharacterized protein (245 aa).

One can recognise an HTH gntR-type domain in the interval 29–96 (RSLIEATFQR…AQRGFHVTPM (68 aa)). Residues 56 to 75 (IEDLKSRYEVSGGTVREALS) constitute a DNA-binding region (H-T-H motif).

This is an uncharacterized protein from Paraburkholderia xenovorans (strain LB400).